Consider the following 951-residue polypeptide: Bifunctional glutamine synthetase adenylyltransferase/adenylyl-removing enzyme (951 aa).

The adenylyl removase stretch occupies residues 1-440 (MLPLPSELQI…VFDDLIGDET (440 aa)). The segment at 449–951 (HGLYKSLWQD…WLAANDANVS (503 aa)) is adenylyl transferase.

The protein belongs to the GlnE family. The cofactor is Mg(2+).

The enzyme catalyses [glutamine synthetase]-O(4)-(5'-adenylyl)-L-tyrosine + phosphate = [glutamine synthetase]-L-tyrosine + ADP. It carries out the reaction [glutamine synthetase]-L-tyrosine + ATP = [glutamine synthetase]-O(4)-(5'-adenylyl)-L-tyrosine + diphosphate. In terms of biological role, involved in the regulation of glutamine synthetase GlnA, a key enzyme in the process to assimilate ammonia. When cellular nitrogen levels are high, the C-terminal adenylyl transferase (AT) inactivates GlnA by covalent transfer of an adenylyl group from ATP to specific tyrosine residue of GlnA, thus reducing its activity. Conversely, when nitrogen levels are low, the N-terminal adenylyl removase (AR) activates GlnA by removing the adenylyl group by phosphorolysis, increasing its activity. The regulatory region of GlnE binds the signal transduction protein PII (GlnB) which indicates the nitrogen status of the cell. This chain is Bifunctional glutamine synthetase adenylyltransferase/adenylyl-removing enzyme, found in Yersinia pseudotuberculosis serotype O:1b (strain IP 31758).